A 474-amino-acid polypeptide reads, in one-letter code: Kynureninase 2 (474 aa).

Pyridoxal 5'-phosphate-binding positions include L144, T145, 172–175 (FPSD), D258, H261, and Y283. An N6-(pyridoxal phosphate)lysine modification is found at K284. W323 and T351 together coordinate pyridoxal 5'-phosphate.

This sequence belongs to the kynureninase family. In terms of assembly, homodimer. It depends on pyridoxal 5'-phosphate as a cofactor.

The protein resides in the cytoplasm. It catalyses the reaction L-kynurenine + H2O = anthranilate + L-alanine + H(+). It carries out the reaction 3-hydroxy-L-kynurenine + H2O = 3-hydroxyanthranilate + L-alanine + H(+). Its pathway is amino-acid degradation; L-kynurenine degradation; L-alanine and anthranilate from L-kynurenine: step 1/1. The protein operates within cofactor biosynthesis; NAD(+) biosynthesis; quinolinate from L-kynurenine: step 2/3. Its function is as follows. Catalyzes the cleavage of L-kynurenine (L-Kyn) and L-3-hydroxykynurenine (L-3OHKyn) into anthranilic acid (AA) and 3-hydroxyanthranilic acid (3-OHAA), respectively. In Emericella nidulans (strain FGSC A4 / ATCC 38163 / CBS 112.46 / NRRL 194 / M139) (Aspergillus nidulans), this protein is Kynureninase 2 (bna5-2).